A 278-amino-acid chain; its full sequence is 4-hydroxy-3-methylbut-2-enyl diphosphate reductase (278 aa).

[4Fe-4S] cluster is bound at residue Cys-12. 2 residues coordinate (2E)-4-hydroxy-3-methylbut-2-enyl diphosphate: His-41 and His-74. 2 residues coordinate dimethylallyl diphosphate: His-41 and His-74. Isopentenyl diphosphate is bound by residues His-41 and His-74. Cys-96 contributes to the [4Fe-4S] cluster binding site. (2E)-4-hydroxy-3-methylbut-2-enyl diphosphate is bound at residue His-124. His-124 lines the dimethylallyl diphosphate pocket. Residue His-124 coordinates isopentenyl diphosphate. The active-site Proton donor is Glu-126. Thr-161 contacts (2E)-4-hydroxy-3-methylbut-2-enyl diphosphate. Position 189 (Cys-189) interacts with [4Fe-4S] cluster. Ser-217, Asn-219, and Ser-261 together coordinate (2E)-4-hydroxy-3-methylbut-2-enyl diphosphate. Dimethylallyl diphosphate is bound by residues Ser-217, Asn-219, and Ser-261. 3 residues coordinate isopentenyl diphosphate: Ser-217, Asn-219, and Ser-261.

The protein belongs to the IspH family. [4Fe-4S] cluster is required as a cofactor.

The catalysed reaction is isopentenyl diphosphate + 2 oxidized [2Fe-2S]-[ferredoxin] + H2O = (2E)-4-hydroxy-3-methylbut-2-enyl diphosphate + 2 reduced [2Fe-2S]-[ferredoxin] + 2 H(+). The enzyme catalyses dimethylallyl diphosphate + 2 oxidized [2Fe-2S]-[ferredoxin] + H2O = (2E)-4-hydroxy-3-methylbut-2-enyl diphosphate + 2 reduced [2Fe-2S]-[ferredoxin] + 2 H(+). It participates in isoprenoid biosynthesis; dimethylallyl diphosphate biosynthesis; dimethylallyl diphosphate from (2E)-4-hydroxy-3-methylbutenyl diphosphate: step 1/1. Its pathway is isoprenoid biosynthesis; isopentenyl diphosphate biosynthesis via DXP pathway; isopentenyl diphosphate from 1-deoxy-D-xylulose 5-phosphate: step 6/6. Functionally, catalyzes the conversion of 1-hydroxy-2-methyl-2-(E)-butenyl 4-diphosphate (HMBPP) into a mixture of isopentenyl diphosphate (IPP) and dimethylallyl diphosphate (DMAPP). Acts in the terminal step of the DOXP/MEP pathway for isoprenoid precursor biosynthesis. This is 4-hydroxy-3-methylbut-2-enyl diphosphate reductase from Anaeromyxobacter sp. (strain K).